The sequence spans 600 residues: Elongation factor 4 (600 aa).

A tr-type G domain is found at 5-187 (KYIRNFSIIA…AIINKLPSPK (183 aa)). GTP-binding positions include 17–22 (DHGKST) and 134–137 (NKID).

The protein belongs to the TRAFAC class translation factor GTPase superfamily. Classic translation factor GTPase family. LepA subfamily.

Its subcellular location is the cell inner membrane. It carries out the reaction GTP + H2O = GDP + phosphate + H(+). Its function is as follows. Required for accurate and efficient protein synthesis under certain stress conditions. May act as a fidelity factor of the translation reaction, by catalyzing a one-codon backward translocation of tRNAs on improperly translocated ribosomes. Back-translocation proceeds from a post-translocation (POST) complex to a pre-translocation (PRE) complex, thus giving elongation factor G a second chance to translocate the tRNAs correctly. Binds to ribosomes in a GTP-dependent manner. The polypeptide is Elongation factor 4 (Rickettsia typhi (strain ATCC VR-144 / Wilmington)).